A 625-amino-acid chain; its full sequence is MARVRGPRLPGCLALAALFSLVHSQHVFLAHQQASSLLQRARRANKGFLEEVRKGNLERECLEEPCSREEAFEALESLSATDAFWAKYTACESARNPREKLNECLEGNCAEGVGMNYRGNVSVTRSGIECQLWRSRYPHKPEINSTTHPGADLRENFCRNPDGSITGPWCYTTSPTLRREECSVPVCGQDRVTVEVIPRSGGSTTSQSPLLETCVPDRGREYRGRLAVTTSGSRCLAWSSEQAKALSKDQDFNPAVPLAENFCRNPDGDEEGAWCYVADQPGDFEYCDLNYCEEPVDGDLGDRLGEDPDPDAAIEGRTSEDHFQPFFNEKTFGAGEADCGLRPLFEKKQVQDQTEKELFESYIEGRIVEGQDAEVGLSPWQVMLFRKSPQELLCGASLISDRWVLTAAHCLLYPPWDKNFTVDDLLVRIGKHSRTRYERKVEKISMLDKIYIHPRYNWKENLDRDIALLKLKRPIELSDYIHPVCLPDKQTAAKLLHAGFKGRVTGWGNRRETWTTSVAEVQPSVLQVVNLPLVERPVCKASTRIRITDNMFCAGYKPGEGKRGDACEGDSGGPFVMKSPYNNRWYQMGIVSWGEGCDRDGKYGFYTHVFRLKKWIQKVIDRLGS.

The signal sequence occupies residues 1 to 24 (MARVRGPRLPGCLALAALFSLVHS). Positions 25–43 (QHVFLAHQQASSLLQRARR) are excised as a propeptide. The Gla domain occupies 44 to 90 (ANKGFLEEVRKGNLERECLEEPCSREEAFEALESLSATDAFWAKYTA). 4-carboxyglutamate occurs at positions 50, 51, 58, 60, 63, 64, 69, 70, 73, and 76. Cys-61 and Cys-66 form a disulfide bridge. 11 cysteine pairs are disulfide-bonded: Cys-91-Cys-104, Cys-109-Cys-187, Cys-130-Cys-170, Cys-158-Cys-182, Cys-214-Cys-292, Cys-235-Cys-275, Cys-263-Cys-287, Cys-339-Cys-485, Cys-394-Cys-410, Cys-539-Cys-553, and Cys-567-Cys-597. Kringle domains lie at 109–187 (CAEG…VPVC) and 214–292 (CVPD…LNYC). N-linked (GlcNAc...) asparagine glycans are attached at residues Asn-120 and Asn-144. In terms of domain architecture, Peptidase S1 spans 367-621 (IVEGQDAEVG…LKKWIQKVID (255 aa)). Residue His-409 is the Charge relay system of the active site. N-linked (GlcNAc...) asparagine glycosylation is present at Asn-419. The active-site Charge relay system is the Asp-465. The tract at residues 554 to 576 (AGYKPGEGKRGDACEGDSGGPFV) is high affinity receptor-binding region which is also known as the TP508 peptide. Ser-571 acts as the Charge relay system in catalysis.

Belongs to the peptidase S1 family. As to quaternary structure, heterodimer (named alpha-thrombin) of a light and a heavy chain; disulfide-linked. Forms a heterodimer with SERPINA5. In plasma, interacts (via N-terminus) with alpha-1-microglobulin; this interaction does not prevent the activation of prothrombin to thrombin. The gamma-carboxyglutamyl residues, which bind calcium ions, result from the carboxylation of glutamyl residues by a microsomal enzyme, the vitamin K-dependent carboxylase. The modified residues are necessary for the calcium-dependent interaction with a negatively charged phospholipid surface, which is essential for the conversion of prothrombin to thrombin. In terms of processing, in the penultimate step of the coagulation cascade, prothrombin is converted to thrombin by the prothrombinase complex composed of factor Xa (F10), cofactor Va (F5), and phospholipids. This activation requires factor Xa-catalyzed sequential cleavage at 2 sites, Arg-317 and Arg-366, along 2 possible pathways. In the first pathway, the first cleavage occurs at Arg-317, leading to the formation of the inactive intermediate prethrombin-2. This pathway preferentially occurs on platelets and in the absence of cofactor Va. In the second pathway, the first cleavage occurs at Arg-366, which separates protease domain into 2 chains that remain connected through a disulfide bond and generates the active intermediate meizothrombin. The presence of cofactor Va directs activation along the meizothrombin pathway and greatly accelerates the rate of cleavage at Arg-366, but has a smaller effect on the cleavage of meizothrombin at Arg-317. Meizothrombin accumulates as an intermediate when prothrombinase is assembled on the membrane of red blood cells. Expressed by the liver and secreted in plasma.

It localises to the secreted. The protein localises to the extracellular space. It carries out the reaction Selective cleavage of Arg-|-Gly bonds in fibrinogen to form fibrin and release fibrinopeptides A and B.. With respect to regulation, activity is promoted in the presence of negatively charged surfaces, such as polyphosphate and dextran sulfate. Inhibited by SERPINA5. In terms of biological role, thrombin, which cleaves bonds after Arg and Lys, converts fibrinogen to fibrin and activates factors V, VII, VIII, XIII, and, in complex with thrombomodulin, protein C. Functions in blood homeostasis, inflammation and wound healing. Activates coagulation factor XI (F11); activation is promoted by the contact with negatively charged surfaces. Triggers the production of pro-inflammatory cytokines, such as MCP-1/CCL2 and IL8/CXCL8, in endothelial cells. The polypeptide is Prothrombin (F2) (Bos taurus (Bovine)).